The primary structure comprises 168 residues: Skp-like protein (168 aa).

A signal peptide spans 1–22; the sequence is MRKFTQFVLITAAIMAAPSAFA.

This sequence belongs to the Skp family.

The chain is Skp-like protein from Pseudomonas aeruginosa (strain ATCC 15692 / DSM 22644 / CIP 104116 / JCM 14847 / LMG 12228 / 1C / PRS 101 / PAO1).